The chain runs to 429 residues: Enolase (429 aa).

Gln-163 serves as a coordination point for (2R)-2-phosphoglycerate. Glu-205 serves as the catalytic Proton donor. Residues Asp-242, Glu-285, and Asp-312 each contribute to the Mg(2+) site. Residues Lys-337, Arg-366, Ser-367, and Lys-388 each contribute to the (2R)-2-phosphoglycerate site. Lys-337 functions as the Proton acceptor in the catalytic mechanism.

This sequence belongs to the enolase family. Requires Mg(2+) as cofactor.

It localises to the cytoplasm. The protein resides in the secreted. It is found in the cell surface. It carries out the reaction (2R)-2-phosphoglycerate = phosphoenolpyruvate + H2O. Its pathway is carbohydrate degradation; glycolysis; pyruvate from D-glyceraldehyde 3-phosphate: step 4/5. In terms of biological role, catalyzes the reversible conversion of 2-phosphoglycerate (2-PG) into phosphoenolpyruvate (PEP). It is essential for the degradation of carbohydrates via glycolysis. The chain is Enolase from Oceanobacillus iheyensis (strain DSM 14371 / CIP 107618 / JCM 11309 / KCTC 3954 / HTE831).